Consider the following 783-residue polypeptide: DNA polymerase II (783 aa).

It belongs to the DNA polymerase type-B family.

It carries out the reaction DNA(n) + a 2'-deoxyribonucleoside 5'-triphosphate = DNA(n+1) + diphosphate. Its activity is regulated as follows. DNA polymerase II activity is regulated by the lexA gene during the SOS response. Functionally, thought to be involved in DNA repair and/or mutagenesis. Its processivity is enhanced by the beta sliding clamp (dnaN) and clamp loader. In Escherichia coli (strain K12), this protein is DNA polymerase II (polB).